Here is a 664-residue protein sequence, read N- to C-terminus: Macoilin (664 aa).

A run of 4 helical transmembrane segments spans residues 28–48 (TFLY…DFVL), 75–95 (AFSV…LLFI), 120–140 (VCLP…AIRF), and 154–174 (FAAH…KSYV). Residues 253 to 265 (REKGKEKDKDAKK) are compositionally biased toward basic and acidic residues. Residues 253-274 (REKGKEKDKDAKKHNLGINNNN) form a disordered region. A Phosphoserine modification is found at Ser-305. Positions 320-348 (KNYKNASGVVNSSPRSHSATNGSIPSSSS) are enriched in polar residues. The interval 320 to 375 (KNYKNASGVVNSSPRSHSATNGSIPSSSSKNEKKQKCTSKGPSAHKDLMENCIPNN) is disordered. N-linked (GlcNAc...) asparagine glycosylation is present at Asn-324. The residue at position 332 (Ser-332) is a Phosphoserine. Asn-340 and Asn-452 each carry an N-linked (GlcNAc...) asparagine glycan. A disordered region spans residues 630–664 (TSPLSPVSPHYSSKFVETSPSGLDPNASVYQPLKK). Residues Ser-631 and Ser-634 each carry the phosphoserine modification. Asn-655 is a glycosylation site (N-linked (GlcNAc...) asparagine).

This sequence belongs to the macoilin family. In terms of tissue distribution, strong expression in whole nervous system up to 12.5 dpc. Highly expressed in all neuronal differentiation fields from 14.5 dpc to birth, with highest expression in the telencephalic cortical plate and mitral cells in the olfactory bulb, and lower expression in neuronal progenitor zones. Progressively decreased expression in fields of neuron precursor proliferation from 14.5 dpc and virtually undetectable there by 17.5 dpc. No significant expression detected outside the nervous system. After birth, significant expression remains in the cerebellum, olfactory bulb and hippocampus.

The protein localises to the rough endoplasmic reticulum membrane. The protein resides in the nucleus membrane. Its function is as follows. Plays a role in the regulation of neuronal activity. This Mus musculus (Mouse) protein is Macoilin (Maco1).